The following is a 227-amino-acid chain: ATP-dependent dethiobiotin synthetase BioD (227 aa).

An ATP-binding site is contributed by 13 to 18 (NIGKTI). T17 is a Mg(2+) binding site. K38 is an active-site residue. S42 is a substrate binding site. Residues D55, 117–120 (EGFG), 177–178 (NH), 206–208 (PFI), and N213 contribute to the ATP site. Positions 55 and 117 each coordinate Mg(2+).

It belongs to the dethiobiotin synthetase family. Homodimer. Mg(2+) serves as cofactor.

The protein localises to the cytoplasm. The enzyme catalyses (7R,8S)-7,8-diammoniononanoate + CO2 + ATP = (4R,5S)-dethiobiotin + ADP + phosphate + 3 H(+). It functions in the pathway cofactor biosynthesis; biotin biosynthesis; biotin from 7,8-diaminononanoate: step 1/2. Catalyzes a mechanistically unusual reaction, the ATP-dependent insertion of CO2 between the N7 and N8 nitrogen atoms of 7,8-diaminopelargonic acid (DAPA, also called 7,8-diammoniononanoate) to form a ureido ring. In Wigglesworthia glossinidia brevipalpis, this protein is ATP-dependent dethiobiotin synthetase BioD.